We begin with the raw amino-acid sequence, 155 residues long: Large ribosomal subunit protein uL16 (155 aa).

The protein belongs to the universal ribosomal protein uL16 family. In terms of assembly, part of the 50S ribosomal subunit.

Binds 23S rRNA and is also seen to make contacts with the A and possibly P site tRNAs. The sequence is that of Large ribosomal subunit protein uL16 from Synechococcus sp. (strain CC9311).